A 429-amino-acid polypeptide reads, in one-letter code: Serine--tRNA ligase (429 aa).

Residue 235–237 (TAE) participates in L-serine binding. Position 266–268 (266–268 (RSE)) interacts with ATP. Residue Glu-289 coordinates L-serine. 353 to 356 (EISS) lines the ATP pocket. Ser-389 lines the L-serine pocket.

It belongs to the class-II aminoacyl-tRNA synthetase family. Type-1 seryl-tRNA synthetase subfamily. In terms of assembly, homodimer. The tRNA molecule binds across the dimer.

It localises to the cytoplasm. The enzyme catalyses tRNA(Ser) + L-serine + ATP = L-seryl-tRNA(Ser) + AMP + diphosphate + H(+). The catalysed reaction is tRNA(Sec) + L-serine + ATP = L-seryl-tRNA(Sec) + AMP + diphosphate + H(+). It participates in aminoacyl-tRNA biosynthesis; selenocysteinyl-tRNA(Sec) biosynthesis; L-seryl-tRNA(Sec) from L-serine and tRNA(Sec): step 1/1. Its function is as follows. Catalyzes the attachment of serine to tRNA(Ser). Is also able to aminoacylate tRNA(Sec) with serine, to form the misacylated tRNA L-seryl-tRNA(Sec), which will be further converted into selenocysteinyl-tRNA(Sec). This chain is Serine--tRNA ligase, found in Haemophilus influenzae (strain PittGG).